The sequence spans 513 residues: Proline-rich receptor-like protein kinase PERK3 (513 aa).

Residues Met-1–Thr-123 lie on the Extracellular side of the membrane. Asn-11 is a glycosylation site (N-linked (GlcNAc...) asparagine). Residues Leu-27–Met-36 are compositionally biased toward polar residues. A disordered region spans residues Leu-27–Ser-119. N-linked (GlcNAc...) asparagine glycosylation occurs at Asn-66. Over residues Pro-78–Arg-89 the composition is skewed to low complexity. Over residues Gly-99–Phe-111 the composition is skewed to polar residues. Residues Gly-124–Leu-144 traverse the membrane as a helical segment. Residues Cys-145–Leu-513 lie on the Cytoplasmic side of the membrane. A Phosphothreonine modification is found at Thr-172. The 152-residue stretch at Phe-183 to Asp-334 folds into the Protein kinase domain. Residues Leu-189–Val-197 and Lys-211 contribute to the ATP site. The residue at position 256 (Tyr-256) is a Phosphotyrosine. Residue Asp-307 is the Proton acceptor of the active site. The residue at position 340 (Ser-340) is a Phosphoserine. Residues Thr-341 and Thr-346 each carry the phosphothreonine modification. Tyr-354 carries the phosphotyrosine modification.

The protein belongs to the protein kinase superfamily. Ser/Thr protein kinase family. In terms of tissue distribution, expressed at low levels in inflorescence bolt, flower buds, siliques, roots, seedlings and leaves.

Its subcellular location is the cell membrane. It carries out the reaction L-seryl-[protein] + ATP = O-phospho-L-seryl-[protein] + ADP + H(+). The catalysed reaction is L-threonyl-[protein] + ATP = O-phospho-L-threonyl-[protein] + ADP + H(+). This Arabidopsis thaliana (Mouse-ear cress) protein is Proline-rich receptor-like protein kinase PERK3 (PERK3).